The sequence spans 692 residues: Elongation factor G (692 aa).

Residues 8–282 form the tr-type G domain; it reads EKTRNIGIMA…AVVEYMPAPT (275 aa). Residues 17-24, 81-85, and 135-138 each bind GTP; these read AHIDAGKT, DTPGH, and NKMD. The interval 285 to 304 is disordered; sequence PNIKGVHPETGEADERHSSD. Basic and acidic residues predominate over residues 290–304; it reads VHPETGEADERHSSD.

The protein belongs to the TRAFAC class translation factor GTPase superfamily. Classic translation factor GTPase family. EF-G/EF-2 subfamily.

The protein resides in the cytoplasm. Catalyzes the GTP-dependent ribosomal translocation step during translation elongation. During this step, the ribosome changes from the pre-translocational (PRE) to the post-translocational (POST) state as the newly formed A-site-bound peptidyl-tRNA and P-site-bound deacylated tRNA move to the P and E sites, respectively. Catalyzes the coordinated movement of the two tRNA molecules, the mRNA and conformational changes in the ribosome. The protein is Elongation factor G of Desulfitobacterium hafniense (strain DSM 10664 / DCB-2).